A 260-amino-acid polypeptide reads, in one-letter code: uncharacterized protein (260 aa).

The ABC transporter domain maps to 4–231 (LHVDHVTHTY…PKELAAMLPF (228 aa)). 40 to 47 (GPSGCGKT) lines the ATP pocket.

It belongs to the ABC transporter superfamily.

This is an uncharacterized protein from Bacillus subtilis (strain 168).